The chain runs to 185 residues: Ribosome-recycling factor (185 aa).

The tract at residues 137 to 158 (DELKKLEKDHTASEDEVKRAQD) is disordered.

It belongs to the RRF family.

The protein localises to the cytoplasm. Functionally, responsible for the release of ribosomes from messenger RNA at the termination of protein biosynthesis. May increase the efficiency of translation by recycling ribosomes from one round of translation to another. In Desulfitobacterium hafniense (strain Y51), this protein is Ribosome-recycling factor.